Consider the following 338-residue polypeptide: Protein WVD2-like 2 (338 aa).

The segment covering 1–14 has biased composition (basic and acidic residues); that stretch reads MGRELVDKHMDKKA. The disordered stretch occupies residues 1 to 150; sequence MGRELVDKHM…SFSVASSSAT (150 aa). 2 stretches are compositionally biased toward polar residues: residues 15-37 and 59-69; these read NSLT…STNE and QGITETPGSHK. The span at 100–115 shows a compositional bias: low complexity; the sequence is NNSLGNGASHNSSSAS. The span at 128 to 138 shows a compositional bias: basic and acidic residues; sequence RIPDHKMHHDE. Positions 177–214 form a coiled coil; the sequence is REFYQKLEEKQKALEAEKRENEKRLKEEQEAVTKQLRK. The segment at 222-338 is disordered; the sequence is PVPSFYQEGP…GENGVGVVEE (117 aa). The span at 288–300 shows a compositional bias: polar residues; the sequence is TNSVPRTPNSSSK.

The protein belongs to the TPX2 family. In terms of tissue distribution, expressed in seedlings.

It is found in the cytoplasm. Its subcellular location is the cytoskeleton. Its function is as follows. Microtubule-associated protein (MAP) that regulates the orientation of interphase cortical microtubules. This is Protein WVD2-like 2 from Arabidopsis thaliana (Mouse-ear cress).